A 459-amino-acid chain; its full sequence is MEAIEWLENFLLDFQGSIVFISHDRSVIRKMATRIVDLDRGQLQSYLGNYDLYLTTKEENLRVEALQNELFDKRLAQEDVWIRQGIKARRTRNEGRVRALKAMREERRQRREVMGTAKLQLDTSSRSGKIVFEMEDVSYEIAGKTLLKDFSTTILRGDKIALVGPNGCGKTTFIKLLLGEIQPTSGKIRCGTKLEIAYFDQYRADLDPEKIVMDNVADGKQDIEINGVKRHVLGYLQEFLFPPKRAMTPVKALSGGERNRLLLAKLLLKPNNLLILDEPTNDLDVETLELLEEILTDYQGTLLIVSHDRQFIDNTATECYLFEGEGRLNKYVGGFFDAKQQQANFWASKAVEEQAKAKKSEPLKEESAVKNDRTSKPKSVKLSYKEQRELEQLPQLLEELETKITTLQAEIADPAFFQQAHDITDAKLKALADTEAELETAFLRWEELEEKKNLADGKA.

The ABC transporter domain occupies 132 to 350 (FEMEDVSYEI…QQANFWASKA (219 aa)). Residue 164–171 (GPNGCGKT) participates in ATP binding. The segment covering 357 to 375 (AKKSEPLKEESAVKNDRTS) has biased composition (basic and acidic residues). The disordered stretch occupies residues 357–381 (AKKSEPLKEESAVKNDRTSKPKSVK).

Belongs to the ABC transporter superfamily. ABCF family. Uup subfamily.

Its subcellular location is the cytoplasm. It carries out the reaction ATP + H2O = ADP + phosphate + H(+). Might play a role in ribosome assembly or function; this is missing the first ABC transporter domain compared to paralogs. The chain is ATP-binding protein Uup-like (uup-B) from Haemophilus influenzae (strain ATCC 51907 / DSM 11121 / KW20 / Rd).